A 374-amino-acid polypeptide reads, in one-letter code: DNA replication and repair protein RecF (374 aa).

30 to 37 contributes to the ATP binding site; the sequence is GNNAQGKS.

It belongs to the RecF family.

It localises to the cytoplasm. In terms of biological role, the RecF protein is involved in DNA metabolism; it is required for DNA replication and normal SOS inducibility. RecF binds preferentially to single-stranded, linear DNA. It also seems to bind ATP. This chain is DNA replication and repair protein RecF, found in Nostoc punctiforme (strain ATCC 29133 / PCC 73102).